The sequence spans 244 residues: DNA repair protein RecO (244 aa).

It belongs to the RecO family.

In terms of biological role, involved in DNA repair and RecF pathway recombination. This is DNA repair protein RecO from Caldicellulosiruptor saccharolyticus (strain ATCC 43494 / DSM 8903 / Tp8T 6331).